A 138-amino-acid chain; its full sequence is UPF0201 protein PH1010 (138 aa).

Belongs to the UPF0201 family.

In Pyrococcus horikoshii (strain ATCC 700860 / DSM 12428 / JCM 9974 / NBRC 100139 / OT-3), this protein is UPF0201 protein PH1010.